The chain runs to 441 residues: Phenoloxidase-activating enzyme (441 aa).

An N-terminal signal peptide occupies residues 1–21 (MFLIWTFIVAVLAIQTKSVVA). Residue Q22 is modified to Pyrrolidone carboxylic acid. Clip domains lie at 23–76 (SCRT…AVCC) and 77–127 (PCNA…SICC). 8 cysteine pairs are disulfide-bonded: C24–C75, C34–C65, C40–C76, C78–C126, C88–C117, C94–C127, C164–C305, and C203–C219. The Peptidase S1 domain occupies 174–440 (IVGGAPASID…YLPWIQNTIE (267 aa)). Residue H218 is the Charge relay system of the active site. 4 residues coordinate Ca(2+): E237, N239, N242, and D246. An N-linked (GlcNAc...) asparagine glycan is attached at N239. D285 serves as the catalytic Charge relay system. An N-linked (GlcNAc...) asparagine glycan is attached at N334. 2 disulfide bridges follow: C356–C377 and C387–C416. S391 serves as the catalytic Charge relay system.

It belongs to the peptidase S1 family. CLIP subfamily. In terms of assembly, in the active form, heterodimer of a light chain and a heavy chain; disulfide-linked. Proteolytically cleaved for activation. Cleavage produces a light chain and a catalytic heavy chain which remains covalently associated probably through an interchain disulfide bond. In terms of processing, glycosylated.

Stabilized by calcium. Inhibited by di-isopropyl phosphorofluoridate (DFP), phenylmethanesulfonylfluoride (PMSF), p-nitrophenyl-p'-guanidinobenzonate (p-NPGB), p-chloromercuribenzoate (PCMB), ethylenediaminetetraacetic acid (EDTA), urea and CI-13c. Endopeptidase with selective post-Arg cleavage site. Activates prophenoloxidase. Has a probable role in the melanization process as part of the innate immune response. This chain is Phenoloxidase-activating enzyme, found in Bombyx mori (Silk moth).